A 151-amino-acid chain; its full sequence is Large-conductance mechanosensitive channel (151 aa).

A run of 2 helical transmembrane segments spans residues 19–39 (VGIIIGGAFTGIVKSLVGDVL) and 85–105 (GLFINAFISFVIMAVAVFFLV).

The protein belongs to the MscL family. In terms of assembly, homopentamer.

Its subcellular location is the cell inner membrane. Functionally, channel that opens in response to stretch forces in the membrane lipid bilayer. May participate in the regulation of osmotic pressure changes within the cell. The polypeptide is Large-conductance mechanosensitive channel (Chlorobaculum parvum (strain DSM 263 / NCIMB 8327) (Chlorobium vibrioforme subsp. thiosulfatophilum)).